The primary structure comprises 330 residues: Phosphate acyltransferase (330 aa).

The protein belongs to the PlsX family. Homodimer. Probably interacts with PlsY.

Its subcellular location is the cytoplasm. The catalysed reaction is a fatty acyl-[ACP] + phosphate = an acyl phosphate + holo-[ACP]. It functions in the pathway lipid metabolism; phospholipid metabolism. In terms of biological role, catalyzes the reversible formation of acyl-phosphate (acyl-PO(4)) from acyl-[acyl-carrier-protein] (acyl-ACP). This enzyme utilizes acyl-ACP as fatty acyl donor, but not acyl-CoA. This is Phosphate acyltransferase from Bacillus licheniformis (strain ATCC 14580 / DSM 13 / JCM 2505 / CCUG 7422 / NBRC 12200 / NCIMB 9375 / NCTC 10341 / NRRL NRS-1264 / Gibson 46).